The sequence spans 238 residues: DNA damage-regulated autophagy modulator protein 1 (238 aa).

6 helical membrane passes run 9–29, 53–73, 91–111, 116–136, 161–181, and 200–220; these read AFVP…SYVV, SGIF…TMYT, VFNL…GIVA, LAVP…GVVY, MAIS…ASLI, and VSAI…LTFI.

It belongs to the DRAM/TMEM150 family.

The protein resides in the lysosome membrane. Its function is as follows. Lysosomal modulator of autophagy that plays a central role in p53/TP53-mediated apoptosis. Not involved in p73/TP73-mediated autophagy. In Mus musculus (Mouse), this protein is DNA damage-regulated autophagy modulator protein 1 (Dram1).